The primary structure comprises 380 residues: QRFP-like peptide receptor (380 aa).

At 1–51 the chain is on the extracellular side; it reads MMLGNMTFTQTILHELLRQHNMTKNEFIERFGLPPLVYVPELSPGAKTVTL. N-linked (GlcNAc...) asparagine glycans are attached at residues N5 and N21. Residues 52–72 form a helical membrane-spanning segment; the sequence is VFYVIIFLAALLGNTLVVVVV. Over 73–83 the chain is Cytoplasmic; the sequence is WKNKVMRTTMN. Residues 84 to 104 form a helical membrane-spanning segment; it reads IFICSLAASDLLITIVCIPVT. Residues 105–122 are Extracellular-facing; that stretch reads LMQNMLQNWIMGDFMCKL. Residues C120 and C203 are joined by a disulfide bond. A helical membrane pass occupies residues 123 to 143; it reads VPFIQTIAVASSILTLTGIAI. The Cytoplasmic portion of the chain corresponds to 144–164; that stretch reads ERYYAIIHPLKVKYLLSKTRA. Residues 165–185 form a helical membrane-spanning segment; it reads GIILALVWVVSVGVATPMLFV. Topologically, residues 186–216 are extracellular; sequence HKAEEIHDFLYEQRFVTCQEKWWGQTQQTSY. Residues 217–237 form a helical membrane-spanning segment; it reads TIFNLVVLFIIPLLTMTSLYI. Topologically, residues 238–269 are cytoplasmic; sequence RIAHRLWVQQPVGVTGNFAHGNSVRRKRQAVK. A helical transmembrane segment spans residues 270-290; sequence MLVVVVLLFAVCWLPYHTVTV. Residues 291 to 305 are Extracellular-facing; the sequence is MNELTGLRLEEKSAK. A helical membrane pass occupies residues 306-326; that stretch reads LLIAIVQLIAFSNSFNNPVVY. The Cytoplasmic segment spans residues 327 to 380; it reads AILNENFKKNFMTMLRCRVNRVSPQQVTPNTLQTPLEQSTRSCRLPAGAPNQQI.

The protein belongs to the G-protein coupled receptor 1 family.

It is found in the cell membrane. Receptor for QRFP-like peptide. The activity of this receptor is mediated by G proteins which activate a phosphatidyl-inositol-calcium second messenger system. The protein is QRFP-like peptide receptor of Branchiostoma floridae (Florida lancelet).